Here is a 498-residue protein sequence, read N- to C-terminus: MGLLVSRVLRCRDSSLLEPQPEAIAGASYIPGSRKRKRNSLEELATSSNVHGPQNQGMYPHQVLNYIYWKRVKISSNDAYQNLFLDGHDSDIKIRALGRTWCLHKVFLCQSGYFANILKGTWRESHHGVINLIIKNEDIDTRSLHFVFGALYTDADLSITPLEVPQVLAAACLLRVDRVIQQCEGIMKETINRNTVCSYYLAAETYRLKAVKTRCFEWLLCNLMVHPSVALYKEVDLKLMYLLALSSDLLVMQKEIDVYTTLKIWMFLYLNPCWNGTMKQLLQHANNWLSTHMAYVDNISFLESEEGLIFQPVFKKLRFQHIICDLTSTTILEQDRLIPMAWLSPIYKQQWLTLLRTQEYGVIGPQVINEQELEECTMRCGTMIPKDGRYTWKWSVGRLGFPLRVTFTRQCVILRQRCQRCDGSACHNHIRNVIFRITLVCFDSNKRVTFRKTTGYKILTFEYKEEQIVMKLDSDVLTFPMCIFCNFLFVNLGNAENK.

The Nuclear localization signal motif lies at 33 to 39 (SRKRKRN). The BTB domain maps to 90–160 (SDIKIRALGR…LYTDADLSIT (71 aa)).

In terms of assembly, interacts with CUL3.

The protein resides in the nucleus matrix. The protein operates within protein modification; protein ubiquitination. Possible function in spermatogenesis. Probable substrate-specific adapter of an E3 ubiquitin-protein ligase complex which mediates the ubiquitination and subsequent proteasomal degradation of target proteins. This Mus musculus (Mouse) protein is Germ cell-less protein-like 2 (Gmcl2).